Reading from the N-terminus, the 219-residue chain is Thiamine-phosphate synthase (219 aa).

4-amino-2-methyl-5-(diphosphooxymethyl)pyrimidine is bound by residues 44–48 and Asn-79; that span reads QFREK. The Mg(2+) site is built by Asp-80 and Asp-99. Residue Ser-117 coordinates 4-amino-2-methyl-5-(diphosphooxymethyl)pyrimidine. Residue 143–145 participates in 2-[(2R,5Z)-2-carboxy-4-methylthiazol-5(2H)-ylidene]ethyl phosphate binding; the sequence is TST. Residue Lys-146 participates in 4-amino-2-methyl-5-(diphosphooxymethyl)pyrimidine binding. Residues Gly-175 and 195–196 contribute to the 2-[(2R,5Z)-2-carboxy-4-methylthiazol-5(2H)-ylidene]ethyl phosphate site; that span reads IS.

It belongs to the thiamine-phosphate synthase family. Mg(2+) serves as cofactor.

The enzyme catalyses 2-[(2R,5Z)-2-carboxy-4-methylthiazol-5(2H)-ylidene]ethyl phosphate + 4-amino-2-methyl-5-(diphosphooxymethyl)pyrimidine + 2 H(+) = thiamine phosphate + CO2 + diphosphate. The catalysed reaction is 2-(2-carboxy-4-methylthiazol-5-yl)ethyl phosphate + 4-amino-2-methyl-5-(diphosphooxymethyl)pyrimidine + 2 H(+) = thiamine phosphate + CO2 + diphosphate. It catalyses the reaction 4-methyl-5-(2-phosphooxyethyl)-thiazole + 4-amino-2-methyl-5-(diphosphooxymethyl)pyrimidine + H(+) = thiamine phosphate + diphosphate. The protein operates within cofactor biosynthesis; thiamine diphosphate biosynthesis; thiamine phosphate from 4-amino-2-methyl-5-diphosphomethylpyrimidine and 4-methyl-5-(2-phosphoethyl)-thiazole: step 1/1. In terms of biological role, condenses 4-methyl-5-(beta-hydroxyethyl)thiazole monophosphate (THZ-P) and 2-methyl-4-amino-5-hydroxymethyl pyrimidine pyrophosphate (HMP-PP) to form thiamine monophosphate (TMP). The polypeptide is Thiamine-phosphate synthase (Bacillus anthracis (strain A0248)).